The chain runs to 82 residues: Small ribosomal subunit protein bS18 (82 aa).

It belongs to the bacterial ribosomal protein bS18 family. Part of the 30S ribosomal subunit. Forms a tight heterodimer with protein bS6.

In terms of biological role, binds as a heterodimer with protein bS6 to the central domain of the 16S rRNA, where it helps stabilize the platform of the 30S subunit. This chain is Small ribosomal subunit protein bS18, found in Chlamydia pneumoniae (Chlamydophila pneumoniae).